The primary structure comprises 658 residues: D-ornithine--citrate ligase (658 aa).

The protein belongs to the IucA/IucC family.

The catalysed reaction is D-ornithine + citrate + ATP = N(5)-[(S)-citryl]-D-ornithine + AMP + diphosphate + H(+). It participates in siderophore biosynthesis. Its function is as follows. Involved in the biosynthesis of the siderophore staphyloferrin A. Catalyzes the ATP-dependent condensation of D-ornithine and citrate to form a citryl-D-ornithine intermediate. This Staphylococcus aureus (strain NCTC 8325 / PS 47) protein is D-ornithine--citrate ligase.